Reading from the N-terminus, the 151-residue chain is Deoxyuridine 5'-triphosphate nucleotidohydrolase (151 aa).

Substrate contacts are provided by residues 70–72, asparagine 83, 87–89, and methionine 97; these read RSG and LID.

Belongs to the dUTPase family. The cofactor is Mg(2+).

It catalyses the reaction dUTP + H2O = dUMP + diphosphate + H(+). It functions in the pathway pyrimidine metabolism; dUMP biosynthesis; dUMP from dCTP (dUTP route): step 2/2. This enzyme is involved in nucleotide metabolism: it produces dUMP, the immediate precursor of thymidine nucleotides and it decreases the intracellular concentration of dUTP so that uracil cannot be incorporated into DNA. The polypeptide is Deoxyuridine 5'-triphosphate nucleotidohydrolase (Azotobacter vinelandii (strain DJ / ATCC BAA-1303)).